We begin with the raw amino-acid sequence, 4687 residues long: MVAGMLMPLDQLRAIYEVLFREGVMVAKKDRRPRSLHPHVPGVTNLQVMRAMTSLKARGLVRETFAWCHFYWYLTNEGIDHLRQYLHLPPEIVPASLQRVRRPVAMVMPARRRSPHVQTMQGPLGCPPKRGPLPAEDPAREERQVYRRKEREEGAPETPVVSATIVGTLARPGPEPTPATDERDRVQKKTSTKWVNKHLIKAQRHISDLYEDLRDGHNLISLLEVLSGDSLPREKGRMRFHKLQNVQIALDYLRHRQVKLVNIRNDDIADGNPKLTLGLIWTIILHFKISDIQVSGQSEDMTAKEKLLLWSQRMVEGYQGLRCDNFTTSWRDGRLFNAIIHRHKPMLIDMNKVYRQTNLENLDQAFSVAERDLGVTRLLDPEDVDVPQPDEKSIITYVSSLYDAMPRVPGAQDGVRANELQLRWQEYRELVLLLLQWIRHHTAAFEERKFPSSFEEIEILWCQFLKFKETELPAKEADKNRSKGIYQSLEGAVQAGQLKIPPGYHPLDVEKEWGKLHVAILEREKQLRSEFERLECLQRIVSKLQMEAGLCEEQLYQADSLLQSDIRLLASGKAAQRAGEVERDLDKADGMIRLLFNDVQTLKDGRHPQGEQMYRRVYRLHERLVAIRTEYNLRLKAGVGAPVTQVTLQSTQRRPELEDSTLRYLHDLLAWVEENQRRIDGAEWGVDLPSVEAQLGSHRGMHQSIEEFRAKIERARNDESQLSPATRGAYRDCLGRLDLQYAKLLNSSKARLRSLESLHGFVAAATKELMWLNEKEEEEVGFDWSDRNTNMAAKKESYSALMRELEMKEKKIKEIQNTGDRLLREDHPARPTVESFQAALQTQWSWMLQLCCCIEAHLKENTAYFQFFSDVREAEEQLQKLQETLRRKYSCDRSITVTRLEDLLQDAQDEKEQLNEYKGHLSGLAKRAKAIVQLKPRNPAHPVRGHVPLLAVCDYKQVEVTVHKGDQCQLVGPAQPFHWKVLSSSGSEAAVPSVCFLVPPPNQEAQEAVARLEAQHQALVTLWHQLHVDMKSLLAWQSLNRDIQLIRSWSLVTFRTLKPEEQRQALRNLELHYQAFLRDSQDAGGFGPEDRLVAEREYGSCSRHYQQLLQSLEQGEQEESRCQRCISELKDIRLQLEACETRTVHRLRLPLDKDPARECAQRIAEQQKAQAEVEGLGKGVARLSAEAEKVLALPEPSPAAPTLRSELELTLGKLEQVRSLSAIYLEKLKTISLVIRSTQGAEEVLKTHEEHLKEAQAVPATLQELEVTKASLKKLRAQAEAQQPVFNTLRDELRGAQEVGERLQQRHGERDVEVERWRERVTQLLERWQAVLAQTDVRQRELEQLGRQLRYYRESADPLSSWLQDAKSRQEQIQAVPIANSQAAREQLRQEKALLEEIERHGEKVEECQKFAKQYINAIKDYELQLITYKAQLEPVASPAKKPKVQSGSESVIQEYVDLRTRYSELTTLTSQYIKFISETLRRMEEEERLAEQQRAEERERLAEVEAALEKQRQLAEAHAQAKAQAELEARELQRRMQEEVTRREEAAVDAQQQKRSIQEELQHLRQSSEAEIQAKAQQVEAAERSRMRIEEEIRVVRLQLETTERQRGGAEDELQALRARAEEAEAQKRQAQEEAERLRRQVQDESQRKRQAEAELALRVKAEAEAAREKQRALQALDELKLQAEEAERWLCQAEAERARQVQVALETAQRSAEVELQSKRPSFAEKTAQLERTLQEEHVTVTQLREEAERRAQQQAEAERAREEAERELERWQLKANEALRLRLQAEEVAQQKSLAQADAEKQKEEAEREARRRGKAEEQAVRQRELAEQELEKQRQLTEGTAQQRLAAEQELIRLRAETEQGEHQRQLLEEELARLQHEATAATQKRQELEAELAKVRAEMEVLLASKARAEEESRSTSEKSKQRLEAEAGRFRELAEEAARLRALAEEARRHRELAEEDAARQRAEADGVLTEKLAAISEATRLKTEAEIALKEKEAENERLRRLAEDEAFQRRRLEEQAAQHKADIEERLAQLRKASESELERQKGLVEDTLRQRRQVEEEIMALKASFEKAAAGKAELELELGRIRSNAEDTMRSKELAEQEAARQRQLAAEEEQRRREAEERVQRSLAAEEEAARQRKVALEEVERLKAKVEEARRLRERAEQESARQLQLAQEAAQKRLQAEEKAHAFVVQQREEELQQTLQQEQNMLERLRSEAEAARRAAEEAEEAREQAEREAAQSRKQVEEAERLKQSAEEQAQAQAQAQAAAEKLRKEAEQEAARRAQAEQAALKQKQAADAEMEKHKKFAEQTLRQKAQVEQELTTLRLQLEETDHQKSILDEELQRLKAEVTEAARQRSQVEEELFSVRVQMEELGKLKARIEAENRALILRDKDNTQRFLEEEAEKMKQVAEEAARLSVAAQEAARLRQLAEEDLAQQRALAEKMLKEKMQAVQEATRLKAEAELLQQQKELAQEQARRLQADKEQMAQQLVEETQGFQRTLEAERQRQLEMSAEAERLKLRMAEMSRAQARAEEDAQRFRKQAEEIGEKLHRTELATQEKVTLVQTLEIQRQQSDQDAERLREAIAELEREKEKLKQEAKLLQLKSEEMQTVQQEQILQETQALQKSFLSEKDSLLQRERFIEQEKAKLEQLFQDEVAKAKQLQEEQQRQQQQMEQEKQELVASMEEARRRQREAEEGVRRKQEELQRLEQQRQQQEKLLAEENQRLRERLQRLEEEHRAALAHSEEIATSQAAATKALPNGRDALDGPSMEAEPEYTFEGLRQKVPAQQLQEAGILSMEELQRLTQGHTTVAELTQREDVRHYLKGGSSIAGLLLKPTNEKLSVYTALQRQLLSPGTALILLEAQAASGFLLDPVRNRRLTVNEAVKEGVVGPELHHKLLSAERAVTGYKDPYTGEQISLFQAMKKDLIVRDHGIRLLEAQIATGGIIDPVHSHRVPVDVAYQRGYFDEEMNRVLADPSDDTKGFFDPNTHENLTYLQLLERCVEDPETGLRLLPLTDKAAKGGELVYTDTEARDVFEKATVSAPFGKFQGKTVTIWEIINSEYFTAEQRRDLLRQFRTGRITVEKIIKIVITVVEEHERKGQLCFEGLRALVPAAELLDSGVISHEVYQQLQRGERSVREVAEADEVRQALRGTSVIAGVWLEEAGQKLSIYEALRRDLLQPEVAVALLEAQAGTGHIIDPATSARLTVDEAVRAGLVGPEMHEKLLSAEKAVTGYRDPYSGQSVSLFQALKKGLIPREQGLRLLDAQLSTGGIVDPSKSHRVPLDVAYARGYLDKETNRALTSPRDDARVYLDPSTREPVTYSQLQQRCRSDQLTGLSLLPLSEKAVRARQEEVYSELQARETLEKAKVEVPVGGFKGRALTVWELISSEYFTEEQRQELLRQFRTGKVTVEKVIKILITIVEEVETQRQERLSFSGLRAPVPASELLASKILSRTQFEQLKDGKTSVKDLSEVGSVRTLLQGSGCLAGIYLEDSKEKVTIYEAMRRGLLRASTATLLLEAQAATGFLVDPVRNQRLYVHEAVKAGVVGPELHEKLLSAEKAVTGYKDPYSGSTISLFQAMKKGLVLRDHAIRLLEAQIATGGIIDPVHSHRLPVDVAYQRGYFDEEMNRVLADPSDDTKGFFDPNTHENLTYLQLLERCVEDPETGLRLLPLRGAEKTEVVETTQVYTEEETRRAFEETQIDIPGGGSHGGSSMSLWEVMQSDMIPEDQRARLMADFQAGRVTKERMIIIIIEIIEKTEIIRQQNLASYDYVRRRLTAEDLYEARIISLETYNLFREGTKSLREVLEMESAWRYLYGTGSVAGVYLPGSRQTLTIYQALKKGLLSAEVARLLLEAQAATGFLLDPVKGERLTVDEAVRKGLVGPELHDRLLSAERAVTGYRDPYTEQPISLFQAMKKELIPAEEALRLLDAQLATGGIVDPRLGFHLPLEVAYQRGYLNKDTHDQLSEPSEVRSYVDPSTDERLSYTQLLKRCRRDDNSGQMLLPLSDARKLTFRGLRKQITVEELVRSQVMDEATALQLQEGLTSIEEVTKNLQKFLEGTSCIAGVFVDATKERLSVYQAMKKGIIRPGTAFELLEAQAATGYVIDPIKGLKLTVEEAVRMGIVGPEFKDKLLSAERAVTGYKDPYSGKLISLFQAMKKGLILKDHGIRLLEAQIATGGIIDPEESHRLPVEVAYKRGLFDEEMNEILTDPSDDTKGFFDPNTEENLTYLQLMERCITDPQTGLCLLPLKEKKRERKTSSKSSVRKRRVVIVDPETGKEMSVYEAYRKGLIDHQTYLELSEQECEWEEITISSSDGVVKSMIIDRRSGRQYDIGDAITKNLIDRSALDQYRAGTLSITEFADMLSGNAGGFRSRSSSVGSSSSYPISSAVPRTQLASWSDPTEETGPVAGILDTETLEKVSITEAMHRNLVDNITGQRLLEAQACTGGIIDPSTGERFPVTEAVNKGLVDKIMVDRINLAQKAFCGFEDPRTKTKMSAAQALKKGWLYYEAGQRFLEVQYLTGGLIEPDTPGRVSLDEALQRGTVDARTAQKLRDVSAYSKYLTCPKTKLKISYKDALDRSMVEEGTGLRLLEAAAQSSKGYYSPYSVSGSGSTAGSRTGSRTGSRAGSRRGSFDATGSGFSMTFSSSSYSSSGYGRRYASGPSASLGGPESAVA.

The tract at residues 1-1473 (MVAGMLMPLD…SELTTLTSQY (1473 aa)) is globular 1. Position 21 is a phosphoserine (R21). V26 is modified (phosphotyrosine). Residues 111-158 (RRRSPHVQTMQGPLGCPPKRGPLPAEDPAREERQVYRRKEREEGAPET) form a disordered region. A compositionally biased stretch (basic and acidic residues) spans 137–154 (DPAREERQVYRRKEREEG). The actin-binding stretch occupies residues 181 to 406 (DERDRVQKKT…YVSSLYDAMP (226 aa)). Calponin-homology (CH) domains lie at 185–288 (RVQK…LHFK) and 301–406 (MTAK…DAMP). The stretch at 648–722 (LQSTQRRPEL…ERARNDESQL (75 aa)) is one Spectrin 1 repeat. S723 bears the Phosphoserine mark. Spectrin repeat units follow at residues 743 to 827 (KLLN…REDH) and 840 to 933 (LQTQ…AIVQ). Phosphothreonine is present on T818. The region spanning 944-1001 (RGHVPLLAVCDYKQVEVTVHKGDQCQLVGPAQPFHWKVLSSSGSEAAVPSVCFLVPPP) is the SH3 domain. Phosphoserine is present on S1050. Residues 1318–1418 (RERVTQLLER…QKFAKQYINA (101 aa)) form a Spectrin 4 repeat. S1438 carries the post-translational modification Phosphoserine. 2 coiled-coil regions span residues 1472-1692 (QYIK…ERWL) and 1724-2760 (SFAE…TSQA). Residues 1474–2758 (IKFISETLRR…LAHSEEIATS (1285 aa)) form a central fibrous rod domain region. Residues 1623–1647 (EEAEAQKRQAQEEAERLRRQVQDES) are disordered. At S1724 the chain carries Phosphoserine. K1728 is subject to N6-acetyllysine. Disordered regions lie at residues 1741-1764 (VTVTQLREEAERRAQQQAEAERAR), 1796-1846 (SLAQ…GTAQ), 2096-2139 (EDTM…AEEE), 2164-2188 (LRERAEQESARQLQLAQEAAQKRLQ), and 2218-2307 (RLRS…DAEM). Composition is skewed to basic and acidic residues over residues 1801–1839 (DAEKQKEEAEREARRRGKAEEQAVRQRELAEQELEKQRQ), 2096–2111 (EDTMRSKELAEQEAAR), and 2119–2131 (EEQRRREAEERVQ). Over residues 2173–2182 (ARQLQLAQEA) the composition is skewed to low complexity. The segment covering 2218-2261 (RLRSEAEAARRAAEEAEEAREQAEREAAQSRKQVEEAERLKQSA) has biased composition (basic and acidic residues). Low complexity predominate over residues 2262–2275 (EEQAQAQAQAQAAA). Basic and acidic residues predominate over residues 2276–2291 (EKLRKEAEQEAARRAQ). S2634 carries the phosphoserine modification. Position 2639 is an N6-acetyllysine (K2639). Residues 2671-2710 (QEEQQRQQQQMEQEKQELVASMEEARRRQREAEEGVRRKQ) form a disordered region. Over residues 2682–2710 (EQEKQELVASMEEARRRQREAEEGVRRKQ) the composition is skewed to basic and acidic residues. Residues 2759 to 4687 (QAAATKALPN…SLGGPESAVA (1929 aa)) form a globular 2 region. A Phosphoserine modification is found at S2777. A Phosphotyrosine modification is found at Y2784. Plectin repeat units lie at residues 2791 to 2828 (QKVPAQQLQEAGILSMEELQRLTQGHTTVAELTQREDV), 2829 to 2866 (RHYLKGGSSIAGLLLKPTNEKLSVYTALQRQLLSPGTA), 2867 to 2904 (LILLEAQAASGFLLDPVRNRRLTVNEAVKEGVVGPELH), 2905 to 2942 (HKLLSAERAVTGYKDPYTGEQISLFQAMKKDLIVRDHG), 2943 to 2980 (IRLLEAQIATGGIIDPVHSHRVPVDVAYQRGYFDEEMN), and 2984 to 3018 (ADPSDDTKGFFDPNTHENLTYLQLLERCVEDPETG). Residue S2805 is modified to Phosphoserine. At T2889 the chain carries Phosphothreonine. Y3036 is modified (phosphotyrosine). 2 positions are modified to N6-acetyllysine: K3056 and K3094. Plectin repeat units lie at residues 3119–3156 (ALVPAAELLDSGVISHEVYQQLQRGERSVREVAEADEV), 3157–3194 (RQALRGTSVIAGVWLEEAGQKLSIYEALRRDLLQPEVA), 3195–3232 (VALLEAQAGTGHIIDPATSARLTVDEAVRAGLVGPEMH), 3233–3270 (EKLLSAEKAVTGYRDPYSGQSVSLFQALKKGLIPREQG), 3271–3308 (LRLLDAQLSTGGIVDPSKSHRVPLDVAYARGYLDKETN), and 3311–3346 (LTSPRDDARVYLDPSTREPVTYSQLQQRCRSDQLTG). Y3365 carries the post-translational modification Phosphotyrosine. N6-acetyllysine is present on K3423. Plectin repeat units follow at residues 3488-3525 (RTLLQGSGCLAGIYLEDSKEKVTIYEAMRRGLLRASTA), 3526-3563 (TLLLEAQAATGFLVDPVRNQRLYVHEAVKAGVVGPELH), 3564-3601 (EKLLSAEKAVTGYKDPYSGSTISLFQAMKKGLVLRDHA), 3602-3639 (IRLLEAQIATGGIIDPVHSHRLPVDVAYQRGYFDEEMN), and 3643-3677 (ADPSDDTKGFFDPNTHENLTYLQLLERCVEDPETG). The residue at position 3583 (S3583) is a Phosphoserine. Phosphothreonine is present on T3788. Y3793 carries the post-translational modification Phosphotyrosine. 5 Plectin repeats span residues 3823 to 3860 (WRYLYGTGSVAGVYLPGSRQTLTIYQALKKGLLSAEVA), 3861 to 3898 (RLLLEAQAATGFLLDPVKGERLTVDEAVRKGLVGPELH), 3899 to 3936 (DRLLSAERAVTGYRDPYTEQPISLFQAMKKELIPAEEA), 3937 to 3974 (LRLLDAQLATGGIVDPRLGFHLPLEVAYQRGYLNKDTH), and 3978 to 4011 (SEPSEVRSYVDPSTDERLSYTQLLKRCRRDDNSG). T4033 carries the post-translational modification Phosphothreonine. S4057 is subject to Phosphoserine. 6 Plectin repeats span residues 4066–4103 (QKFLEGTSCIAGVFVDATKERLSVYQAMKKGIIRPGTA), 4104–4141 (FELLEAQAATGYVIDPIKGLKLTVEEAVRMGIVGPEFK), 4142–4179 (DKLLSAERAVTGYKDPYSGKLISLFQAMKKGLILKDHG), 4180–4217 (IRLLEAQIATGGIIDPEESHRLPVEVAYKRGLFDEEMN), 4221–4255 (TDPSDDTKGFFDPNTEENLTYLQLMERCITDPQTG), and 4268–4308 (RKTS…HQTY). The segment at 4253-4303 (QTGLCLLPLKEKKRERKTSSKSSVRKRRVVIVDPETGKEMSVYEAYRKGLI) is binding to intermediate filaments. 8 positions are modified to phosphoserine: S4385, S4387, S4388, S4389, S4392, S4393, S4394, and S4395. Y4396 carries the phosphotyrosine modification. 2 positions are modified to phosphoserine: S4399 and S4409. Plectin repeat units follow at residues 4411–4448 (SDPTEETGPVAGILDTETLEKVSITEAMHRNLVDNITG), 4449–4486 (QRLLEAQACTGGIIDPSTGERFPVTEAVNKGLVDKIMV), 4487–4524 (DRINLAQKAFCGFEDPRTKTKMSAAQALKKGWLYYEAG), 4525–4562 (QRFLEVQYLTGGLIEPDTPGRVSLDEALQRGTVDARTA), and 4563–4600 (QKLRDVSAYSKYLTCPKTKLKISYKDALDRSMVEEGTG). At T4414 the chain carries Phosphothreonine. T4542 carries the phosphothreonine; by CDK1 modification. Residues S4610 and S4616 each carry the phosphoserine modification. Positions 4614–4674 (YYSPYSVSGS…SGYGRRYASG (61 aa)) are enriched in low complexity. The interval 4614–4687 (YYSPYSVSGS…SLGGPESAVA (74 aa)) is disordered. The residue at position 4618 (Y4618) is a Phosphotyrosine. Phosphoserine is present on residues S4619, S4621, and S4625. Phosphothreonine is present on T4626. Residues 4628–4643 (GSRTGSRTGSRAGSRR) are 4 X 4 AA tandem repeats of G-S-R-X. The residue at position 4629 (S4629) is a Phosphoserine. 2 positions are modified to omega-N-methylarginine: R4630 and R4643. S4645 and S4678 each carry phosphoserine.

It belongs to the plakin or cytolinker family. Homodimer or homotetramer. Interacts (via actin-binding domain) with SYNE3. Interacts (via calponin-homology (CH) 1 domain) with VIM (via rod region). Interacts (via N-terminus) with DST isoform 2 (via N-terminus). Interacts with FER. Interacts with TOR1A. Interacts with ANK3. Identified in complexes that contain VIM, EZR, AHNAK, BFSP1, BFSP2, ANK2, PLEC, PRX and spectrin. Phosphorylated by CDK1; regulates dissociation from intermediate filaments during mitosis. Isoform 2 is phosphorylated on Ser-21 and Tyr-26. In terms of tissue distribution, widely expressed with highest expression in skeletal muscle and lowest in thymus.

It localises to the cytoplasm. The protein resides in the cytoskeleton. Its subcellular location is the cell junction. The protein localises to the hemidesmosome. It is found in the cell projection. It localises to the podosome. Functionally, interlinks intermediate filaments with microtubules and microfilaments and anchors intermediate filaments to desmosomes or hemidesmosomes. May be involved not only in the cross-linking and stabilization of cytoskeletal intermediate filaments network, but also in the regulation of their dynamics. The sequence is that of Plectin (Plec) from Rattus norvegicus (Rat).